The sequence spans 295 residues: UDP-3-O-acyl-N-acetylglucosamine deacetylase (295 aa).

Zn(2+) contacts are provided by His75, His232, and Asp236. His259 acts as the Proton donor in catalysis.

It belongs to the LpxC family. The cofactor is Zn(2+).

It catalyses the reaction a UDP-3-O-[(3R)-3-hydroxyacyl]-N-acetyl-alpha-D-glucosamine + H2O = a UDP-3-O-[(3R)-3-hydroxyacyl]-alpha-D-glucosamine + acetate. It participates in glycolipid biosynthesis; lipid IV(A) biosynthesis; lipid IV(A) from (3R)-3-hydroxytetradecanoyl-[acyl-carrier-protein] and UDP-N-acetyl-alpha-D-glucosamine: step 2/6. In terms of biological role, catalyzes the hydrolysis of UDP-3-O-myristoyl-N-acetylglucosamine to form UDP-3-O-myristoylglucosamine and acetate, the committed step in lipid A biosynthesis. The polypeptide is UDP-3-O-acyl-N-acetylglucosamine deacetylase (Helicobacter pylori (strain J99 / ATCC 700824) (Campylobacter pylori J99)).